A 1285-amino-acid chain; its full sequence is Protein crumbs homolog 2 (1285 aa).

The first 28 residues, 1-28 (MALARPGTPDPQALASVLLLLLWAPALS), serve as a signal peptide directing secretion. The interval 1 to 350 (MALARPGTPD…GFQCHCPDGY (350 aa)) is required for maximum inhibition of APP amyloid-beta peptide secretion. Residues 67–106 (EPRGCATQPCHHGALCVPQGPDPTGFRCYCVPGFQGPRCE) enclose the EGF-like 1 domain. 27 cysteine pairs are disulfide-bonded: Cys71-Cys82, Cys76-Cys94, Cys96-Cys105, Cys112-Cys123, Cys117-Cys132, Cys134-Cys143, Cys150-Cys161, Cys155-Cys170, Cys172-Cys181, Cys188-Cys199, Cys193-Cys208, Cys210-Cys220, Cys227-Cys238, Cys232-Cys247, Cys249-Cys258, Cys265-Cys276, Cys270-Cys306, Cys308-Cys317, Cys324-Cys335, Cys329-Cys344, Cys346-Cys355, Cys362-Cys373, Cys367-Cys382, Cys384-Cys393, Cys400-Cys411, Cys405-Cys424, and Cys426-Cys435. The 37-residue stretch at 108-144 (DIDECASRPCHHGATCRNLADRYECHCPLGYAGVTCE) folds into the EGF-like 2; calcium-binding domain. The region spanning 146-182 (EVDECASAPCLHGGSCLDGVGSFRCVCAPGYGGTRCQ) is the EGF-like 3; calcium-binding domain. One can recognise an EGF-like 4; calcium-binding domain in the interval 184 to 221 (DLDECQSQPCAHGGTCHDLVNGFRCDCAGTGYEGTHCE). EGF-like domains follow at residues 223 to 259 (EVLE…ELCE) and 261 to 318 (DEDE…ADCG). N-linked (GlcNAc...) asparagine glycosylation is present at Asn235. O-linked (Glc...) serine glycosylation is present at Ser267. In terms of domain architecture, EGF-like 7; calcium-binding spans 320 to 356 (EVDECASRPCLNGGHCQDLPNGFQCHCPDGYAGPTCE). Residues 358 to 394 (DVDECLSDPCLHGGTCSDTVAGYICRCPETWGGRDCS) enclose the EGF-like 8; calcium-binding domain. The 41-residue stretch at 396-436 (QLTGCQGHTCPLAATCIPIFESGVHSYVCHCPPGTHGPFCG) folds into the EGF-like 9 domain. The region spanning 431–603 (HGPFCGQNTT…DLGENVLLGC (173 aa)) is the Laminin G-like 1 domain. N-linked (GlcNAc...) asparagine glycosylation is found at Asn438 and Asn478. Disulfide bonds link Cys579–Cys603, Cys609–Cys620, Cys614–Cys629, and Cys631–Cys640. An EGF-like 10 domain is found at 605–641 (RREQCRPLPCVHGGSCVDLWTHFRCDCARPHRGPTCA). Positions 647–805 (ATFGLGGAPS…RQSWNLTAGC (159 aa)) constitute a Laminin G-like 2 domain. Asn669, Asn690, Asn786, and Asn800 each carry an N-linked (GlcNAc...) asparagine glycan. 4 disulfides stabilise this stretch: Cys766-Cys805, Cys811-Cys822, Cys816-Cys831, and Cys833-Cys842. Residues 807 to 843 (SEDMCSPDPCFNGGTCLVTWNDFHCTCPANFTGPTCA) form the EGF-like 11 domain. N-linked (GlcNAc...) asparagine glycans are attached at residues Asn836, Asn886, Asn926, and Asn1009. The 184-residue stretch at 871 to 1054 (EATFREGPPA…PGTPAPILGC (184 aa)) folds into the Laminin G-like 3 domain. Intrachain disulfides connect Cys1013/Cys1054, Cys1060/Cys1071, Cys1065/Cys1080, Cys1082/Cys1091, Cys1098/Cys1108, Cys1103/Cys1118, Cys1120/Cys1129, Cys1138/Cys1150, Cys1144/Cys1159, Cys1161/Cys1170, Cys1177/Cys1188, Cys1182/Cys1197, and Cys1199/Cys1208. 4 EGF-like domains span residues 1056–1092 (GAPV…PRCE), 1094–1130 (HVDP…PRCR), 1134–1171 (PSKE…QRCQ), and 1173–1209 (PTLP…QFCE). Residues Asn1141 and Asn1158 are each glycosylated (N-linked (GlcNAc...) asparagine). A helical transmembrane segment spans residues 1225-1245 (VAVPAACACLLLLLLGLLSGI). Residues 1249 to 1285 (RKRRQSEGTYSPSQQEVAGARLEMDSVLKVPPEERLI) form an interaction with EPB41L5 region.

This sequence belongs to the Crumbs protein family. In terms of assembly, associates with the gamma-secretase complex via interaction (via the transmembrane domain) with PSEN1/PS1. Interacts (via intracellular domain) with EPB41L5. Interacts with PALS1. O-glucosylated by POGLUT1 at Ser-267; consists of an O-glucose trisaccharide, in which the O-glucose is elongated by the addition of two xylose residues. O-glucosylation is required for localization at the plasma membrane. In terms of processing, N-glycosylated. In terms of tissue distribution, expressed in glomeruli, podocytes of the glomerular capillary loops, and parietal glomerular epithelial cells in the kidney (at protein level). Expressed in retina, fetal eye and brain. Also expressed in kidney, RPE/choroid, and at low levels in lung, placenta, and heart.

The protein resides in the apical cell membrane. It localises to the cytoplasm. The protein localises to the cell junction. Its subcellular location is the secreted. Its function is as follows. Apical polarity protein that plays a central role during the epithelial-to-mesenchymal transition (EMT) at gastrulation, when newly specified mesodermal cells move inside the embryo. Acts by promoting cell ingression, the process by which cells leave the epithelial epiblast and move inside the embryo to form a new tissue layer. The anisotropic distribution of CRB2 and MYH10/myosin-IIB at cell edges define which cells will ingress: cells with high apical CRB2 are probably extruded from the epiblast by neighboring cells with high levels of apical MYH10/myosin-IIB. Plays a role in the maintenance of retinal neuroepithelium organization, structural integrity, adhesion, photoreceptor polarity and retinal photoreceptor layer thickness. May play a role in determining the length of cone photoreceptor outer segments and proliferation of late-born progenitor cells. Also required for maintenance of the apical polarity complex during development of the cortex. Inhibits gamma-secretase-dependent cleavage of APP and secretion of amyloid-beta peptide 40 and amyloid-beta peptide 42, and thereby inhibits gamma-secretase-dependent Notch transcription. In Homo sapiens (Human), this protein is Protein crumbs homolog 2.